We begin with the raw amino-acid sequence, 328 residues long: dITP/XTP pyrophosphatase (328 aa).

The unknown stretch occupies residues 1 to 129 (MSEKIYEYKD…ATSEQGFGDT (129 aa)). The NTP pyrophosphatase stretch occupies residues 130–324 (ILIATRNEGK…KLMEVFPAWQ (195 aa)). A substrate-binding site is contributed by 134–139 (TRNEGK). Catalysis depends on D196, which acts as the Proton acceptor. D196 contacts Mg(2+). Substrate-binding positions include S197, 280-283 (FGYD), K303, and 308-309 (HR).

Belongs to the HAM1 NTPase family. Homodimer. Mg(2+) serves as cofactor.

The enzyme catalyses XTP + H2O = XMP + diphosphate + H(+). It carries out the reaction dITP + H2O = dIMP + diphosphate + H(+). It catalyses the reaction ITP + H2O = IMP + diphosphate + H(+). Functionally, pyrophosphatase that catalyzes the hydrolysis of nucleoside triphosphates to their monophosphate derivatives, with a high preference for the non-canonical purine nucleotides XTP (xanthosine triphosphate), dITP (deoxyinosine triphosphate) and ITP. Seems to function as a house-cleaning enzyme that removes non-canonical purine nucleotides from the nucleotide pool, thus preventing their incorporation into DNA/RNA and avoiding chromosomal lesions. The chain is dITP/XTP pyrophosphatase from Streptococcus pyogenes serotype M18 (strain MGAS8232).